A 255-amino-acid chain; its full sequence is Putative Myb family transcription factor At1g14600 (255 aa).

In terms of domain architecture, HTH myb-type spans 20–80 (RSPVPRLRWT…HLQMYRGSRI (61 aa)). A DNA-binding region (H-T-H motif) is located at residues 51–76 (PKLVLKIMDVKGLTISHVKSHLQMYR). A disordered region spans residues 80–110 (ITLLGKPEESSSPSSRRRRRQDNEEDHLHDN).

It localises to the nucleus. Putative transcription factor. This Arabidopsis thaliana (Mouse-ear cress) protein is Putative Myb family transcription factor At1g14600.